Consider the following 395-residue polypeptide: Elongation factor Tu (395 aa).

In terms of domain architecture, tr-type G spans 10-204; sequence KPHVNIGTIG…EVDAYIPTPE (195 aa). Residues 19–26 are G1; sequence GHVDHGKT. Residue 19–26 coordinates GTP; sequence GHVDHGKT. Mg(2+) is bound at residue Thr26. The segment at 60-64 is G2; that stretch reads GITIS. The G3 stretch occupies residues 81-84; that stretch reads DCPG. GTP contacts are provided by residues 81–85 and 136–139; these read DCPGH and NKCD. The tract at residues 136-139 is G4; it reads NKCD. Residues 174-176 form a G5 region; it reads SAL.

It belongs to the TRAFAC class translation factor GTPase superfamily. Classic translation factor GTPase family. EF-Tu/EF-1A subfamily. As to quaternary structure, monomer.

The protein localises to the cytoplasm. It catalyses the reaction GTP + H2O = GDP + phosphate + H(+). Its function is as follows. GTP hydrolase that promotes the GTP-dependent binding of aminoacyl-tRNA to the A-site of ribosomes during protein biosynthesis. This chain is Elongation factor Tu, found in Bacillus anthracis (strain A0248).